A 131-amino-acid polypeptide reads, in one-letter code: Holo-[acyl-carrier-protein] synthase (131 aa).

Residues Asp-8 and Glu-57 each contribute to the Mg(2+) site.

It belongs to the P-Pant transferase superfamily. AcpS family. Mg(2+) is required as a cofactor.

It localises to the cytoplasm. It carries out the reaction apo-[ACP] + CoA = holo-[ACP] + adenosine 3',5'-bisphosphate + H(+). In terms of biological role, transfers the 4'-phosphopantetheine moiety from coenzyme A to a Ser of acyl-carrier-protein. The protein is Holo-[acyl-carrier-protein] synthase of Thiobacillus denitrificans (strain ATCC 25259 / T1).